Here is a 105-residue protein sequence, read N- to C-terminus: Heme oxygenase (mycobilin-producing) (105 aa).

Positions V3 to F92 constitute an ABM domain. Residues R22–R26, H75, and V83–G86 each bind heme.

It belongs to the antibiotic biosynthesis monooxygenase family. As to quaternary structure, homodimer.

It catalyses the reaction heme b + 3 AH2 + 3 O2 + 2 H(+) = mycobilin a + Fe(2+) + 3 A + 3 H2O. It carries out the reaction heme b + 3 AH2 + 3 O2 + 2 H(+) = mycobilin b + Fe(2+) + 3 A + 3 H2O. Functionally, catalyzes the oxidative degradation of the heme macrocyclic porphyrin ring in the presence of a suitable electron donor such as ascorbate or NADPH--cytochrome P450 reductase, with subsequent release of free iron. In Mycobacterium tuberculosis (strain CDC 1551 / Oshkosh), this protein is Heme oxygenase (mycobilin-producing) (mhuD).